The following is a 299-amino-acid chain: Bifunctional protein FolD (299 aa).

NADP(+) is bound by residues 168–170 (GRS), S193, and I234.

This sequence belongs to the tetrahydrofolate dehydrogenase/cyclohydrolase family. In terms of assembly, homodimer.

The catalysed reaction is (6R)-5,10-methylene-5,6,7,8-tetrahydrofolate + NADP(+) = (6R)-5,10-methenyltetrahydrofolate + NADPH. The enzyme catalyses (6R)-5,10-methenyltetrahydrofolate + H2O = (6R)-10-formyltetrahydrofolate + H(+). Its pathway is one-carbon metabolism; tetrahydrofolate interconversion. Functionally, catalyzes the oxidation of 5,10-methylenetetrahydrofolate to 5,10-methenyltetrahydrofolate and then the hydrolysis of 5,10-methenyltetrahydrofolate to 10-formyltetrahydrofolate. This is Bifunctional protein FolD from Bartonella bacilliformis (strain ATCC 35685 / KC583 / Herrer 020/F12,63).